Here is a 631-residue protein sequence, read N- to C-terminus: Probable potassium transport system protein Kup 1 (631 aa).

12 helical membrane-spanning segments follow: residues 17 to 37, 55 to 75, 101 to 121, 140 to 160, 166 to 186, 217 to 237, 249 to 269, 277 to 297, 338 to 358, 370 to 390, 395 to 415, and 420 to 440; these read LALG…LYAL, LSLI…MIIF, PLFY…GMLT, LYPY…SLQA, IGYL…ILGI, FLLG…ADIG, FFIA…NLIV, PFFM…ATVA, IYVP…CLAF, IAVN…AVSI, TFNV…FLGA, and FITG…IMYS.

The protein belongs to the HAK/KUP transporter (TC 2.A.72) family.

The protein localises to the cell inner membrane. It catalyses the reaction K(+)(in) + H(+)(in) = K(+)(out) + H(+)(out). Functionally, transport of potassium into the cell. Likely operates as a K(+):H(+) symporter. This Legionella pneumophila (strain Corby) protein is Probable potassium transport system protein Kup 1.